The following is a 944-amino-acid chain: E3 ubiquitin-protein ligase HACE1 (944 aa).

7 ANK repeats span residues 23-55, 64-93, 97-126, 130-159, 163-192, 196-226, and 228-253; these read LPED…NSKF, VKRS…DPNY, SGCT…DVNI, EGLT…NVDV, MGQT…DINR, SGAT…YLPD, and NGVT…QHHP. The HECT domain maps to 609-944; the sequence is NCEKLKQGIA…HCGSYGYTMA (336 aa). Cys-911 serves as the catalytic Glycyl thioester intermediate.

Its subcellular location is the golgi apparatus. The protein localises to the golgi stack membrane. The protein resides in the cytoplasm. It is found in the endoplasmic reticulum. The catalysed reaction is S-ubiquitinyl-[E2 ubiquitin-conjugating enzyme]-L-cysteine + [acceptor protein]-L-lysine = [E2 ubiquitin-conjugating enzyme]-L-cysteine + N(6)-ubiquitinyl-[acceptor protein]-L-lysine.. Its pathway is protein modification; protein ubiquitination. In terms of biological role, E3 ubiquitin-protein ligase involved in Golgi membrane fusion and regulation of small GTPases. Acts as a regulator of Golgi membrane dynamics during the cell cycle: recruited to Golgi membrane by Rab proteins and regulates postmitotic Golgi membrane fusion. Acts by mediating ubiquitination during mitotic Golgi disassembly, ubiquitination serving as a signal for Golgi reassembly later, after cell division. The sequence is that of E3 ubiquitin-protein ligase HACE1 (hace1) from Xenopus laevis (African clawed frog).